The following is a 59-amino-acid chain: UPF0181 protein CKO_01169 (59 aa).

It belongs to the UPF0181 family.

This chain is UPF0181 protein CKO_01169, found in Citrobacter koseri (strain ATCC BAA-895 / CDC 4225-83 / SGSC4696).